Reading from the N-terminus, the 118-residue chain is UPF0148 protein M1627_1409 (118 aa).

Belongs to the UPF0148 family.

This chain is UPF0148 protein M1627_1409, found in Saccharolobus islandicus (strain M.16.27) (Sulfolobus islandicus).